The following is a 123-amino-acid chain: MAWAPLLLTLLSLLTGSLSQPVLTQPPSASASLGASVTLTCTLSSGYSNYKVDWYQQRPGKGPRFVMRVGTGGIVGSKGDGIPDRFSVLGSGLNRYLTIKNIQEEDESDYHCGADHGSGSNFV.

The N-terminal stretch at 1–19 is a signal peptide; it reads MAWAPLLLTLLSLLTGSLS. The interval 20-44 is framework-1; it reads QPVLTQPPSASASLGASVTLTCTLS. Residues 21 to 123 enclose the Ig-like domain; it reads PVLTQPPSAS…ADHGSGSNFV (103 aa). Residues Cys-41 and Cys-112 are joined by a disulfide bond. The segment at 45-51 is complementarity-determining-1; sequence SGYSNYK. Residues 52 to 68 are framework-2; that stretch reads VDWYQQRPGKGPRFVMR. Residues 69–76 are complementarity-determining-2; that stretch reads VGTGGIVG. A framework-3 region spans residues 77 to 112; that stretch reads SKGDGIPDRFSVLGSGLNRYLTIKNIQEEDESDYHC. Phosphotyrosine is present on Tyr-96. Thr-98 is modified (phosphothreonine). Residues 113-123 are complementarity-determining-3; the sequence is GADHGSGSNFV.

As to quaternary structure, immunoglobulins are composed of two identical heavy chains and two identical light chains; disulfide-linked.

Its subcellular location is the secreted. It localises to the cell membrane. Its function is as follows. V region of the variable domain of immunoglobulin light chains that participates in the antigen recognition. Immunoglobulins, also known as antibodies, are membrane-bound or secreted glycoproteins produced by B lymphocytes. In the recognition phase of humoral immunity, the membrane-bound immunoglobulins serve as receptors which, upon binding of a specific antigen, trigger the clonal expansion and differentiation of B lymphocytes into immunoglobulins-secreting plasma cells. Secreted immunoglobulins mediate the effector phase of humoral immunity, which results in the elimination of bound antigens. The antigen binding site is formed by the variable domain of one heavy chain, together with that of its associated light chain. Thus, each immunoglobulin has two antigen binding sites with remarkable affinity for a particular antigen. The variable domains are assembled by a process called V-(D)-J rearrangement and can then be subjected to somatic hypermutations which, after exposure to antigen and selection, allow affinity maturation for a particular antigen. The protein is Immunoglobulin lambda variable 9-49 of Homo sapiens (Human).